The primary structure comprises 362 residues: Acyl-CoA-binding domain-containing protein 3 (362 aa).

The first 22 residues, 1–22, serve as a signal peptide directing secretion; sequence MEVFLEMLLTAVVALLFSFLLA. 2 disordered regions span residues 132-151 and 193-214; these read QDEQ…SPEN and VEKS…EKTE. The stretch at 192–221 forms a coiled coil; that stretch reads RVEKSSNMVEESDAEAENEEKTELTIEEDD. Positions 231 to 318 constitute an ACB domain; it reads LEKAFAAAVN…VSKEIPGLTK (88 aa). An acyl-CoA contacts are provided by residues 260-264, Lys-286, and Tyr-305; that span reads FGLHK. Residues 329–362 form a disordered region; the sequence is METSVGLPPNSGSLEDPTNLVTTGVDESSKNGIP.

It belongs to the ACBP family. In terms of tissue distribution, expressed in roots, stems, leaves, flowers and siliques.

The protein localises to the secreted. It localises to the extracellular space. In terms of biological role, binds medium- and long-chain acyl-CoA esters with very high affinity. Can interact in vitro with arachidonyl-CoA, barely with oleoyl-CoA, but not with palmitoyl-CoA. The chain is Acyl-CoA-binding domain-containing protein 3 (ACBP3) from Arabidopsis thaliana (Mouse-ear cress).